We begin with the raw amino-acid sequence, 339 residues long: Methylthioribose-1-phosphate isomerase (339 aa).

Substrate contacts are provided by residues Arg-49–Ala-51, Arg-86, and Gln-187. Catalysis depends on Asp-228, which acts as the Proton donor. A substrate-binding site is contributed by Asn-238–Lys-239.

It belongs to the eIF-2B alpha/beta/delta subunits family. MtnA subfamily.

The catalysed reaction is 5-(methylsulfanyl)-alpha-D-ribose 1-phosphate = 5-(methylsulfanyl)-D-ribulose 1-phosphate. The protein operates within amino-acid biosynthesis; L-methionine biosynthesis via salvage pathway; L-methionine from S-methyl-5-thio-alpha-D-ribose 1-phosphate: step 1/6. Catalyzes the interconversion of methylthioribose-1-phosphate (MTR-1-P) into methylthioribulose-1-phosphate (MTRu-1-P). This chain is Methylthioribose-1-phosphate isomerase, found in Cronobacter sakazakii (strain ATCC BAA-894) (Enterobacter sakazakii).